Reading from the N-terminus, the 224-residue chain is tRNA (guanine-N(7)-)-methyltransferase (224 aa).

S-adenosyl-L-methionine-binding residues include Glu-57, Asp-82, and Asp-109. Position 167 (Asp-167) interacts with substrate.

This sequence belongs to the class I-like SAM-binding methyltransferase superfamily. TrmB family.

It carries out the reaction guanosine(46) in tRNA + S-adenosyl-L-methionine = N(7)-methylguanosine(46) in tRNA + S-adenosyl-L-homocysteine. Its pathway is tRNA modification; N(7)-methylguanine-tRNA biosynthesis. Catalyzes the formation of N(7)-methylguanine at position 46 (m7G46) in tRNA. The chain is tRNA (guanine-N(7)-)-methyltransferase from Chloroflexus aggregans (strain MD-66 / DSM 9485).